The chain runs to 504 residues: uncharacterized protein (504 aa).

Disordered regions lie at residues 1–59 and 171–255; these read MSSS…KNEY and GVNS…NQRL. Basic and acidic residues-rich tracts occupy residues 36–50 and 199–212; these read KPIDKEKEKEKKEIG and RAETPKGRKTESRQ. Positions 213-232 are enriched in polar residues; the sequence is SNRGNNDNGDQRMTSKATTR.

This is an uncharacterized protein from Caenorhabditis elegans.